Here is a 996-residue protein sequence, read N- to C-terminus: Sodium/potassium-transporting ATPase subunit alpha-A (996 aa).

2 helical membrane-spanning segments follow: residues 73 to 93 (LFGGFQMLLWIGSILCFIAYT) and 107 to 123 (LYLGLALLFVVIMTGCF). Residues 191-211 (DNSSLTGESEPQSRSTECTND) form a disordered region. 2 helical membrane passes run 268-290 (FIHIITAMAVSLAAVFAVISFLY) and 297-325 (AAIFMIGIIVAKVPEGLLATVTVCLTLTA). Aspartate 353 serves as the catalytic 4-aspartylphosphate intermediate. Lysine 483 lines the ATP pocket. Residues aspartate 692 and aspartate 696 each contribute to the Mg(2+) site. 4 helical membrane passes run 762–785 (LSPFLMYILFDLPLAIGTVTILCI), 820–847 (ERLISMAYGQIGVMQAFGGFFTYFVIMG), 889–909 (YTCHTAFFISIVIVQWTDLII), and 926–951 (TLNFALVFETCVAAFLSYTPGMDKGL).

Belongs to the cation transport ATPase (P-type) (TC 3.A.3) family. Type IIC subfamily. In terms of assembly, the sodium/potassium-transporting ATPase is composed of a catalytic alpha subunit, an auxiliary non-catalytic beta subunit and an additional regulatory subunit.

It localises to the cell membrane. It catalyses the reaction K(+)(out) + Na(+)(in) + ATP + H2O = K(+)(in) + Na(+)(out) + ADP + phosphate + H(+). Its function is as follows. This is the catalytic component of the active enzyme, which catalyzes the hydrolysis of ATP coupled with the exchange of sodium and potassium ions across the plasma membrane. This action creates the electrochemical gradient of sodium and potassium ions, providing the energy for active transport of various nutrients. The sequence is that of Sodium/potassium-transporting ATPase subunit alpha-A from Artemia franciscana (Brine shrimp).